Reading from the N-terminus, the 321-residue chain is Glucokinase (321 aa).

Residue 8 to 13 participates in ATP binding; sequence ADIGGT.

The protein belongs to the bacterial glucokinase family.

It is found in the cytoplasm. The enzyme catalyses D-glucose + ATP = D-glucose 6-phosphate + ADP + H(+). The protein is Glucokinase of Paramagnetospirillum magneticum (strain ATCC 700264 / AMB-1) (Magnetospirillum magneticum).